A 330-amino-acid polypeptide reads, in one-letter code: Protein-lysine N-methyltransferase EEF2KMT (330 aa).

Met1 is subject to N-acetylmethionine. S-adenosyl-L-methionine is bound by residues Trp139, 165–167 (GSG), Trp228, and Ala247.

Belongs to the class I-like SAM-binding methyltransferase superfamily. EEF2KMT family. In terms of assembly, interacts with FAM86B2 and FAM86C1P.

It is found in the cytoplasm. It catalyses the reaction L-lysyl-[protein] + 3 S-adenosyl-L-methionine = N(6),N(6),N(6)-trimethyl-L-lysyl-[protein] + 3 S-adenosyl-L-homocysteine + 3 H(+). Its function is as follows. Catalyzes the trimethylation of eukaryotic elongation factor 2 (EEF2) on 'Lys-525'. This is Protein-lysine N-methyltransferase EEF2KMT from Homo sapiens (Human).